The primary structure comprises 710 residues: Elongation factor G (710 aa).

One can recognise a tr-type G domain in the interval 8-297; that stretch reads ERVRNIGIAA…AVVDYLPSPI (290 aa). GTP is bound by residues 17–24, 96–100, and 150–153; these read AHIDAGKT, DTPGH, and NKMD.

It belongs to the TRAFAC class translation factor GTPase superfamily. Classic translation factor GTPase family. EF-G/EF-2 subfamily.

It localises to the cytoplasm. In terms of biological role, catalyzes the GTP-dependent ribosomal translocation step during translation elongation. During this step, the ribosome changes from the pre-translocational (PRE) to the post-translocational (POST) state as the newly formed A-site-bound peptidyl-tRNA and P-site-bound deacylated tRNA move to the P and E sites, respectively. Catalyzes the coordinated movement of the two tRNA molecules, the mRNA and conformational changes in the ribosome. This chain is Elongation factor G, found in Synechococcus sp. (strain JA-3-3Ab) (Cyanobacteria bacterium Yellowstone A-Prime).